A 231-amino-acid polypeptide reads, in one-letter code: 2-C-methyl-D-erythritol 4-phosphate cytidylyltransferase (231 aa).

Belongs to the IspD/TarI cytidylyltransferase family. IspD subfamily.

It carries out the reaction 2-C-methyl-D-erythritol 4-phosphate + CTP + H(+) = 4-CDP-2-C-methyl-D-erythritol + diphosphate. Its pathway is isoprenoid biosynthesis; isopentenyl diphosphate biosynthesis via DXP pathway; isopentenyl diphosphate from 1-deoxy-D-xylulose 5-phosphate: step 2/6. In terms of biological role, catalyzes the formation of 4-diphosphocytidyl-2-C-methyl-D-erythritol from CTP and 2-C-methyl-D-erythritol 4-phosphate (MEP). This Shewanella piezotolerans (strain WP3 / JCM 13877) protein is 2-C-methyl-D-erythritol 4-phosphate cytidylyltransferase.